Here is a 215-residue protein sequence, read N- to C-terminus: Large ribosomal subunit protein uL3 (215 aa).

At Q153 the chain carries N5-methylglutamine.

It belongs to the universal ribosomal protein uL3 family. Part of the 50S ribosomal subunit. Forms a cluster with proteins L14 and L19. Methylated by PrmB.

Its function is as follows. One of the primary rRNA binding proteins, it binds directly near the 3'-end of the 23S rRNA, where it nucleates assembly of the 50S subunit. In Nitrosococcus oceani (strain ATCC 19707 / BCRC 17464 / JCM 30415 / NCIMB 11848 / C-107), this protein is Large ribosomal subunit protein uL3.